The sequence spans 259 residues: Nuclear egress protein 1 (259 aa).

Residues 80 to 184 form a CCCH-type zinc finger; the sequence is CLDLSPYANE…YVVFQTRTLH (105 aa).

Belongs to the herpesviridae NEC1 protein family. In terms of assembly, forms a heterohexameric complex with NEC2. Interacts with capsid vertex specific component 2/CVC2; this interaction directs the capsid to the host inner nuclear membrane to initiate budding. Post-translationally, phosphorylated at serine residues in the N-terminus. This phosphorylation regulates the localization within the inner nuclear membrane.

Its subcellular location is the host nucleus inner membrane. In terms of biological role, plays an essential role in virion nuclear egress, the first step of virion release from infected cell. Within the host nucleus, NEC1 interacts with the newly formed capsid through the vertexes and directs it to the inner nuclear membrane by associating with NEC2. Induces the budding of the capsid at the inner nuclear membrane as well as its envelopment into the perinuclear space. There, the NEC1/NEC2 complex promotes the fusion of the enveloped capsid with the outer nuclear membrane and the subsequent release of the viral capsid into the cytoplasm where it will reach the secondary budding sites in the host Golgi or trans-Golgi network. The protein is Nuclear egress protein 1 of Homo sapiens (Human).